The following is a 414-amino-acid chain: Light-independent protochlorophyllide reductase subunit N (414 aa).

Residues Cys-16, Cys-41, and Cys-98 each contribute to the [4Fe-4S] cluster site.

It belongs to the BchN/ChlN family. As to quaternary structure, protochlorophyllide reductase is composed of three subunits; BchL, BchN and BchB. Forms a heterotetramer of two BchB and two BchN subunits. Requires [4Fe-4S] cluster as cofactor.

It carries out the reaction chlorophyllide a + oxidized 2[4Fe-4S]-[ferredoxin] + 2 ADP + 2 phosphate = protochlorophyllide a + reduced 2[4Fe-4S]-[ferredoxin] + 2 ATP + 2 H2O. Its pathway is porphyrin-containing compound metabolism; bacteriochlorophyll biosynthesis (light-independent). Component of the dark-operative protochlorophyllide reductase (DPOR) that uses Mg-ATP and reduced ferredoxin to reduce ring D of protochlorophyllide (Pchlide) to form chlorophyllide a (Chlide). This reaction is light-independent. The NB-protein (BchN-BchB) is the catalytic component of the complex. This chain is Light-independent protochlorophyllide reductase subunit N, found in Roseiflexus castenholzii (strain DSM 13941 / HLO8).